A 319-amino-acid polypeptide reads, in one-letter code: Carboxylesterase NlhH (319 aa).

The Involved in the stabilization of the negatively charged intermediate by the formation of the oxyanion hole signature appears at 88–90; the sequence is HGG. Residues serine 162, aspartate 260, and histidine 290 contribute to the active site.

This sequence belongs to the 'GDXG' lipolytic enzyme family. Monomer.

The enzyme catalyses a carboxylic ester + H2O = an alcohol + a carboxylate + H(+). Hydrolyzes various short-chain esters. In Mycobacterium tuberculosis (strain CDC 1551 / Oshkosh), this protein is Carboxylesterase NlhH (nlhH).